Consider the following 256-residue polypeptide: Hydroxyacylglutathione hydrolase (256 aa).

Positions 57, 59, 61, 62, 115, 134, and 172 each coordinate Zn(2+).

This sequence belongs to the metallo-beta-lactamase superfamily. Glyoxalase II family. As to quaternary structure, monomer. Zn(2+) is required as a cofactor.

The catalysed reaction is an S-(2-hydroxyacyl)glutathione + H2O = a 2-hydroxy carboxylate + glutathione + H(+). It participates in secondary metabolite metabolism; methylglyoxal degradation; (R)-lactate from methylglyoxal: step 2/2. In terms of biological role, thiolesterase that catalyzes the hydrolysis of S-D-lactoyl-glutathione to form glutathione and D-lactic acid. The protein is Hydroxyacylglutathione hydrolase of Maricaulis maris (strain MCS10) (Caulobacter maris).